We begin with the raw amino-acid sequence, 295 residues long: Fructose-bisphosphate aldolase class 1 (295 aa).

Residue Glu-176 is the Proton acceptor of the active site. Lys-213 (schiff-base intermediate with dihydroxyacetone-P) is an active-site residue.

It belongs to the class I fructose-bisphosphate aldolase family.

The catalysed reaction is beta-D-fructose 1,6-bisphosphate = D-glyceraldehyde 3-phosphate + dihydroxyacetone phosphate. It functions in the pathway carbohydrate degradation; glycolysis; D-glyceraldehyde 3-phosphate and glycerone phosphate from D-glucose: step 4/4. The protein is Fructose-bisphosphate aldolase class 1 of Clostridium beijerinckii (strain ATCC 51743 / NCIMB 8052) (Clostridium acetobutylicum).